Reading from the N-terminus, the 446-residue chain is Protein IQ-DOMAIN 19 (446 aa).

Positions 93–140 (IPGTPKEKRRWSFRRSSATGPPPPACAITLKDSPPPPPPPPPPPPLQQ) are disordered. Pro residues predominate over residues 125–139 (SPPPPPPPPPPPPLQ). IQ domains are found at residues 163 to 191 (EEFA…GLVK) and 192 to 214 (LQAL…CMQA). Positions 214 to 231 (ALITLQAKAREQRIRMIG) are calmodulin-binding. Residues 332-345 (QSSKAKARSQSAPK) are compositionally biased toward low complexity. Residues 332 to 398 (QSSKAKARSQ…TAKESQQHHH (67 aa)) are disordered. The segment covering 379-392 (QRSSSQLGSNTAKE) has biased composition (polar residues).

Belongs to the IQD family. In terms of assembly, binds to multiple calmodulin (CaM) in the presence of Ca(2+) and CaM-like proteins.

The protein localises to the cytoplasm. It is found in the cytoskeleton. It localises to the cell membrane. May be involved in cooperative interactions with calmodulins or calmodulin-like proteins. Recruits calmodulin proteins to microtubules, thus being a potential scaffold in cellular signaling and trafficking. Acts as a positive regulator of trichome branch initiation. May associate with nucleic acids and regulate gene expression at the transcriptional or post-transcriptional level. This is Protein IQ-DOMAIN 19 from Arabidopsis thaliana (Mouse-ear cress).